Here is a 300-residue protein sequence, read N- to C-terminus: MELRQLRYFMEVAEREHVSEAADHLHVAQSAISRQIANLEEELNVTLFEREGRNIKLTPIGKEFLIHVKTAMKAIDYAKEQIDEYLDPHRGTVKIGFPTSLASQLLPTVISAFKEEYPHVEFLLRQGSYKFLIEAVRNRDIDLALLGPVPTNFSDITGKILFTEKIYALVPLNHPLAKQKTVHLIDLRNDQFVLFPEGFVLREMAIDTCKQAGFAPLVSTEGEDLDAIKGLVSAGMGVTLLPESTFAETTPRFTVKIPIEFPQVKRTVGIIKPKNRELAPSANDFYEFVIQFFSKLEQYQ.

One can recognise an HTH lysR-type domain in the interval 1–58 (MELRQLRYFMEVAEREHVSEAADHLHVAQSAISRQIANLEEELNVTLFEREGRNIKLT). The H-T-H motif DNA-binding region spans 18 to 37 (VSEAADHLHVAQSAISRQIA).

This sequence belongs to the LysR transcriptional regulatory family. Interacts with gutamate dehydrogenase RocG.

Its activity is regulated as follows. Activated by alpha-ketoglutarate and inhibited by glutamate and by RocG. In terms of biological role, positive regulator of glutamate biosynthesis (gltAB genes). Negatively regulates its own expression. This is Transcriptional dual regulator GltC (gltC) from Bacillus subtilis (strain 168).